Here is a 464-residue protein sequence, read N- to C-terminus: Siroheme synthase (464 aa).

The precorrin-2 dehydrogenase /sirohydrochlorin ferrochelatase stretch occupies residues 1–203; the sequence is MDYLPLFHKL…GQGAEAERLL (203 aa). Residues 22–23 and 43–44 contribute to the NAD(+) site; these read EI and PE. Residue Ser128 is modified to Phosphoserine. The uroporphyrinogen-III C-methyltransferase stretch occupies residues 216–464; that stretch reads GEVYLVGAGP…AWFEGSQQDQ (249 aa). Residue Pro225 coordinates S-adenosyl-L-methionine. The Proton acceptor role is filled by Asp248. The active-site Proton donor is the Lys270. S-adenosyl-L-methionine-binding positions include 301–303, Ile306, 331–332, Met383, and Gly412; these read GGD and TA.

The protein in the N-terminal section; belongs to the precorrin-2 dehydrogenase / sirohydrochlorin ferrochelatase family. This sequence in the C-terminal section; belongs to the precorrin methyltransferase family.

The catalysed reaction is uroporphyrinogen III + 2 S-adenosyl-L-methionine = precorrin-2 + 2 S-adenosyl-L-homocysteine + H(+). The enzyme catalyses precorrin-2 + NAD(+) = sirohydrochlorin + NADH + 2 H(+). It carries out the reaction siroheme + 2 H(+) = sirohydrochlorin + Fe(2+). Its pathway is cofactor biosynthesis; adenosylcobalamin biosynthesis; precorrin-2 from uroporphyrinogen III: step 1/1. It participates in cofactor biosynthesis; adenosylcobalamin biosynthesis; sirohydrochlorin from precorrin-2: step 1/1. The protein operates within porphyrin-containing compound metabolism; siroheme biosynthesis; precorrin-2 from uroporphyrinogen III: step 1/1. It functions in the pathway porphyrin-containing compound metabolism; siroheme biosynthesis; siroheme from sirohydrochlorin: step 1/1. Its pathway is porphyrin-containing compound metabolism; siroheme biosynthesis; sirohydrochlorin from precorrin-2: step 1/1. Its function is as follows. Multifunctional enzyme that catalyzes the SAM-dependent methylations of uroporphyrinogen III at position C-2 and C-7 to form precorrin-2 via precorrin-1. Then it catalyzes the NAD-dependent ring dehydrogenation of precorrin-2 to yield sirohydrochlorin. Finally, it catalyzes the ferrochelation of sirohydrochlorin to yield siroheme. In Pseudomonas putida (strain W619), this protein is Siroheme synthase.